We begin with the raw amino-acid sequence, 284 residues long: tRNA-cytidine(32) 2-sulfurtransferase (284 aa).

The segment covering 1–11 has biased composition (polar residues); it reads MTFHQPVSETA. The interval 1-20 is disordered; sequence MTFHQPVSETAQPDEASGHP. Residues 63 to 68 carry the PP-loop motif motif; it reads SGGKDS. [4Fe-4S] cluster-binding residues include Cys138, Cys141, and Cys229.

It belongs to the TtcA family. Homodimer. Mg(2+) serves as cofactor. Requires [4Fe-4S] cluster as cofactor.

Its subcellular location is the cytoplasm. The catalysed reaction is cytidine(32) in tRNA + S-sulfanyl-L-cysteinyl-[cysteine desulfurase] + AH2 + ATP = 2-thiocytidine(32) in tRNA + L-cysteinyl-[cysteine desulfurase] + A + AMP + diphosphate + H(+). It participates in tRNA modification. Functionally, catalyzes the ATP-dependent 2-thiolation of cytidine in position 32 of tRNA, to form 2-thiocytidine (s(2)C32). The sulfur atoms are provided by the cysteine/cysteine desulfurase (IscS) system. This is tRNA-cytidine(32) 2-sulfurtransferase from Chelativorans sp. (strain BNC1).